Consider the following 343-residue polypeptide: D-erythrose-4-phosphate dehydrogenase (343 aa).

12–13 is an NAD(+) binding site; it reads RI. Residues 154 to 156, R200, 213 to 214, and R236 contribute to the substrate site; these read SCT and TK. The active-site Nucleophile is the C155. Residue N318 participates in NAD(+) binding.

It belongs to the glyceraldehyde-3-phosphate dehydrogenase family. Epd subfamily. As to quaternary structure, homotetramer.

Its subcellular location is the cytoplasm. The enzyme catalyses D-erythrose 4-phosphate + NAD(+) + H2O = 4-phospho-D-erythronate + NADH + 2 H(+). The protein operates within cofactor biosynthesis; pyridoxine 5'-phosphate biosynthesis; pyridoxine 5'-phosphate from D-erythrose 4-phosphate: step 1/5. Catalyzes the NAD-dependent conversion of D-erythrose 4-phosphate to 4-phosphoerythronate. The sequence is that of D-erythrose-4-phosphate dehydrogenase from Pseudoalteromonas translucida (strain TAC 125).